A 415-amino-acid polypeptide reads, in one-letter code: S-inosyl-L-homocysteine hydrolase (415 aa).

Substrate is bound by residues aspartate 123 and glutamate 148. 149–151 (TTT) is an NAD(+) binding site. Residues lysine 178 and aspartate 182 each coordinate substrate. NAD(+) contacts are provided by residues asparagine 183, 212–217 (GYGWCG), glutamate 235, 291–293 (AGH), and asparagine 337.

It belongs to the adenosylhomocysteinase family. The cofactor is NAD(+).

The protein resides in the cytoplasm. The enzyme catalyses S-inosyl-L-homocysteine + H2O = L-homocysteine + inosine. It participates in amino-acid biosynthesis; S-adenosyl-L-methionine biosynthesis. Its function is as follows. Catalyzes the hydrolysis of S-inosyl-L-homocysteine (SIH) to L-homocysteine (Hcy) and inosine. Likely functions in a S-adenosyl-L-methionine (SAM) recycling pathway from S-adenosyl-L-homocysteine (SAH) produced from SAM-dependent methylation reactions. Can also catalyze the reverse reaction in vitro, i.e. the synthesis of SIH from Hcy and inosine. This Methanococcus maripaludis (strain DSM 14266 / JCM 13030 / NBRC 101832 / S2 / LL) protein is S-inosyl-L-homocysteine hydrolase.